The chain runs to 527 residues: Endogenous retrovirus group FC1 member 1 Env polyprotein (527 aa).

The tract at residues 1–411 is surface protein; the sequence is MNSPCDRLQQ…EPRPQNKSKW (411 aa). Residues 280–283 carry the CXXC motif; that stretch reads CFLC. The tract at residues 412–432 is fusion peptide; it reads AIFLPLVLGISLASSLVASGL. Positions 412–527 are transmembrane protein; it reads AIFLPLVLGI…LKKKKSSKRS (116 aa). The CKS-17 motif lies at 477–493; the sequence is AQNRQALDLLMAEKGRT. Cys494 and Cys501 are oxidised to a cystine. The CX6CC motif lies at 494-502; sequence CLFLQEECC.

The protein belongs to the gamma type-C retroviral envelope protein family. HERV class-I F(c)2 env subfamily. The CXXC motif is highly conserved across a broad range of retroviral envelope proteins. It is thought to participate in the formation of a labile disulfide bond possibly with the CX6CC motif present in the transmembrane domain. As to expression, low expression in skin and testis.

It is found in the virion. Functionally, retroviral envelope proteins mediate receptor recognition and membrane fusion during early infection. Endogenous envelope proteins may have kept, lost or modified their original function during evolution. This endogenous envelope protein has lost its original fusogenic properties. The chain is Endogenous retrovirus group FC1 member 1 Env polyprotein (ERVFC1-1) from Homo sapiens (Human).